Here is an 868-residue protein sequence, read N- to C-terminus: MSSFVLDFQEIEKTQLFLVGGKGLNLGELSNIQGIQVPEGFCVTTVGYEQAIGKNGAFQTLLNQLAMLKIEERDRIGEISKQIREVIMAVEIPVDVVESVAHYLSHFGDEHAYAVRSSATAEDLPYASFAGQQDTYLNVIGKENILQHIKKCWASLFTDRAVIYRMQNGFDHNQVSICVVIQKMVFPEASGILFTADPITSNRKVLSIDASFGLGEALVSGLVSADNYKVKEDEIVEKVIATKKLAIYGRKEGGTERKKIAPNQQKFQTLTEQQILQLARIGRQIEAYFGCPQDIEWCLVDDTIYIVQSRPITTLYPIPEVNDGENHVYISVGHQQMMTDAMKPLGLSFFLLTTSAPMCKAGGRLFVDATQRLASPASRDYLINTLGKSDPLIRDALTTVIERENFIKLLSDDEKEKDLSKNVPPASSQQQPENDPEIVTNLIKNSELSIEELKRNMQTKSGVDVLDFILEDIQQLKKVLFNSQSIAIIMAGMNASSWINEKMEQWLGEKNAADVLSQSVQHNITSEMGLALLDVADVIRPYPEVIAYLQHVEDDSFLDELIQFKGGEKVRDAIDAFLNKYGMRCSGEIDITKTRWSEQPATIIPMILNHIRDFEYGASKRKFEEGLQEALKKEKELLERLQHLPDGEQKVEETKRMICNLRNFIGYREYPKYGMIHRYFIYKQALLKEAEKLVQNNVLNEIEDIYYLTFEELHEVVRTNKLDYKIIHKQKNAYKLYEKLTPPRVITSDGEIITGKYKRENLPAEAIVGLPVSSGVVEGRARVILNMEDANLEDGDILVTAFTDPGWTPLFVSIKGLVTEVGGLMTHGAVIAREYGLPAVVGVENATKLIKDGQRIRVHGTEGYIEVL.

The segment at 1–313 (MSSFVLDFQE…IYIVQSRPIT (313 aa)) is ATP-binding. ATP contacts are provided by Lys-22, Arg-116, Gly-131, Thr-135, Gln-182, Glu-296, Gln-308, and Arg-310. The rifampicin-binding stretch occupies residues 326-756 (NHVYISVGHQ…TSDGEIITGK (431 aa)). Residues 769–867 (GLPVSSGVVE…VHGTEGYIEV (99 aa)) form a swivel phosphohistidine region. His-827 serves as the catalytic Tele-phosphohistidine intermediate.

This sequence belongs to the rifampicin phosphotransferase family.

It carries out the reaction rifampicin + ATP + H2O = 21-phosphorifampicin + AMP + phosphate + 2 H(+). Catalyzes the phosphorylation of rifampicin, also known as rifampin (RIF), leading to its inactivation. Confers high level resistance to a variety of clinically used rifamycin antibiotics. Does not show phosphoenolpyruvate (PEP) synthase activity. The sequence is that of Rifampicin phosphotransferase from Bacillus cereus (strain ATCC 14579 / DSM 31 / CCUG 7414 / JCM 2152 / NBRC 15305 / NCIMB 9373 / NCTC 2599 / NRRL B-3711).